Consider the following 41-residue polypeptide: Large ribosomal subunit protein bL36 (41 aa).

This sequence belongs to the bacterial ribosomal protein bL36 family.

This is Large ribosomal subunit protein bL36 from Rickettsia prowazekii (strain Madrid E).